The following is a 202-amino-acid chain: MDKFTTHTGVGIPLRRSNVDTDQIIPAVYLKRVTRTGFEDGLFAAWRNDPSFVLNNEGYAGASVLVAGPDFGTGSSREHAVWALQNYGFKVVISPRFADIFRGNSGKAGLLAAQVDESVVQKIWDLLDEHPGTAVTVDLESRTVRAGEGVDAIEASFDIDDYTRWRLLEGLDDIGITLGHADAIASYEATRPSWRPATIHAH.

It belongs to the LeuD family. LeuD type 1 subfamily. Heterodimer of LeuC and LeuD.

It catalyses the reaction (2R,3S)-3-isopropylmalate = (2S)-2-isopropylmalate. It functions in the pathway amino-acid biosynthesis; L-leucine biosynthesis; L-leucine from 3-methyl-2-oxobutanoate: step 2/4. Catalyzes the isomerization between 2-isopropylmalate and 3-isopropylmalate, via the formation of 2-isopropylmaleate. This is 3-isopropylmalate dehydratase small subunit from Nocardioides sp. (strain ATCC BAA-499 / JS614).